We begin with the raw amino-acid sequence, 99 residues long: Ubiquitin-related modifier 1 homolog (99 aa).

Residue Gly-99 is modified to 1-thioglycine. Residue Gly-99 forms a Glycyl lysine isopeptide (Gly-Lys) (interchain with K-? in acceptor proteins) linkage.

This sequence belongs to the URM1 family. Interacts with cer. C-terminal thiocarboxylation occurs in 2 steps, it is first acyl-adenylated (-COAMP) via the hesA/moeB/thiF part of the MOCS3 homolog, then thiocarboxylated (-COSH) via the rhodanese domain of the MOCS3 homolog.

The protein localises to the cytoplasm. The protein operates within tRNA modification; 5-methoxycarbonylmethyl-2-thiouridine-tRNA biosynthesis. Functionally, acts as a sulfur carrier required for 2-thiolation of mcm(5)S(2)U at tRNA wobble positions of cytosolic tRNA(Lys), tRNA(Glu) and tRNA(Gln). Serves as sulfur donor in tRNA 2-thiolation reaction by being thiocarboxylated (-COSH) at its C-terminus by MOCS3. The sulfur is then transferred to tRNA to form 2-thiolation of mcm(5)S(2)U. Also acts as a ubiquitin-like protein (UBL) that is covalently conjugated via an isopeptide bond to lysine residues of target proteins such as Prx2/Jafrac1, Ciao1, Eip71CD and GILT1. The thiocarboxylated form serves as substrate for conjugation and oxidative stress specifically induces the formation of UBL-protein conjugates. The protein is Ubiquitin-related modifier 1 homolog of Drosophila virilis (Fruit fly).